Here is a 258-residue protein sequence, read N- to C-terminus: Protein U52 (258 aa).

It belongs to the herpesviridae UL79 family.

This is Protein U52 (U52) from Human herpesvirus 6B (strain Z29) (HHV-6 variant B).